Reading from the N-terminus, the 804-residue chain is Leucine--tRNA ligase (804 aa).

The short motif at 40-51 (PYPSGAGLHVGH) is the 'HIGH' region element. Residues 576-580 (KMSKS) carry the 'KMSKS' region motif. Lys-579 is an ATP binding site.

This sequence belongs to the class-I aminoacyl-tRNA synthetase family.

The protein localises to the cytoplasm. The enzyme catalyses tRNA(Leu) + L-leucine + ATP = L-leucyl-tRNA(Leu) + AMP + diphosphate. In Bacillus subtilis (strain 168), this protein is Leucine--tRNA ligase.